Consider the following 85-residue polypeptide: Beta-insect depressant toxin Lqh-dprIT3f (85 aa).

Residues 1–21 form the signal peptide; sequence MKLLLLLTISASMLIEGLVNA. The 61-residue stretch at 22-82 folds into the LCN-type CS-alpha/beta domain; sequence DGYIRGGDGC…EWDYETDTCG (61 aa). Intrachain disulfides connect C31–C81, C35–C56, C42–C63, and C46–C65. G82 is modified (glycine amide).

This sequence belongs to the long (4 C-C) scorpion toxin superfamily. Sodium channel inhibitor family. Beta subfamily. As to expression, expressed by the venom gland.

It localises to the secreted. Depressant insect beta-toxins cause a transient contraction paralysis followed by a slow flaccid paralysis. They bind voltage-independently at site-4 of sodium channels (Nav) and block action potentials, primarily by depolarizing the axonal membrane and suppressing the sodium current. This depressant toxin is active only on insects. It is found in a relatively small amount in the venom. This Leiurus hebraeus (Hebrew deathstalker scorpion) protein is Beta-insect depressant toxin Lqh-dprIT3f.